A 448-amino-acid chain; its full sequence is Putative RNA-ligase (448 aa).

It belongs to the asfivirus M448R family.

It is found in the virion. The protein is Putative RNA-ligase of Ornithodoros (relapsing fever ticks).